The primary structure comprises 96 residues: MNPTTFIISFMIALSGLAFYQTHLLSLFLCLEGMALSVFCLMAISSSYTLSLSTIPLPLIMLTFSVCEAGLSLVLLVTMTRTHQNDLMSSLTLLKC.

3 consecutive transmembrane segments (helical) span residues 1 to 21, 24 to 44, and 57 to 77; these read MNPT…AFYQ, LLSL…LMAI, and LPLI…VLLV.

This sequence belongs to the complex I subunit 4L family.

Its subcellular location is the mitochondrion membrane. The enzyme catalyses a ubiquinone + NADH + 5 H(+)(in) = a ubiquinol + NAD(+) + 4 H(+)(out). In terms of biological role, core subunit of the mitochondrial membrane respiratory chain NADH dehydrogenase (Complex I) which catalyzes electron transfer from NADH through the respiratory chain, using ubiquinone as an electron acceptor. Part of the enzyme membrane arm which is embedded in the lipid bilayer and involved in proton translocation. The protein is NADH-ubiquinone oxidoreductase chain 4L (MT-ND4L) of Myxine glutinosa (Atlantic hagfish).